Reading from the N-terminus, the 141-residue chain is VLSSDDKCNVKAVWSKVAGHLEEYGAEALERMFCAYPQTKIYFPHFDLSHGSAQIRAHGKKVFAALHEAVNHIDDLPGALCRLSELHAHSLRVDPVNFKFLAQCVLVVVAIHHPGSLTPEVHASLDKFLCAVSSVLTSKYR.

The region spanning 1-141 (VLSSDDKCNV…VSSVLTSKYR (141 aa)) is the Globin domain. His-58 serves as a coordination point for O2. A heme b-binding site is contributed by His-87.

Belongs to the globin family. In terms of assembly, heterotetramer of two alpha chains and two beta chains. Red blood cells.

Its function is as follows. Involved in oxygen transport from the lung to the various peripheral tissues. In Crocodylus niloticus (Nile crocodile), this protein is Hemoglobin subunit alpha (HBA).